A 156-amino-acid polypeptide reads, in one-letter code: Aspartate 1-decarboxylase (156 aa).

The active-site Schiff-base intermediate with substrate; via pyruvic acid is S26. The residue at position 26 (S26) is a Pyruvic acid (Ser). T58 serves as a coordination point for substrate. Y59 serves as the catalytic Proton donor. 74–76 (GGA) contributes to the substrate binding site.

The protein belongs to the PanD family. As to quaternary structure, heterooctamer of four alpha and four beta subunits. Requires pyruvate as cofactor. Post-translationally, is synthesized initially as an inactive proenzyme, which is activated by self-cleavage at a specific serine bond to produce a beta-subunit with a hydroxyl group at its C-terminus and an alpha-subunit with a pyruvoyl group at its N-terminus.

Its subcellular location is the cytoplasm. It carries out the reaction L-aspartate + H(+) = beta-alanine + CO2. The protein operates within cofactor biosynthesis; (R)-pantothenate biosynthesis; beta-alanine from L-aspartate: step 1/1. Functionally, catalyzes the pyruvoyl-dependent decarboxylation of aspartate to produce beta-alanine. This is Aspartate 1-decarboxylase from Gloeothece citriformis (strain PCC 7424) (Cyanothece sp. (strain PCC 7424)).